The chain runs to 428 residues: 5'-nucleotidase domain-containing protein 4 (428 aa).

Catalysis depends on aspartate 22, which acts as the Nucleophile. Mg(2+) contacts are provided by aspartate 22, aspartate 24, and aspartate 317. Aspartate 24 serves as the catalytic Proton donor.

It belongs to the 5'(3')-deoxyribonucleotidase family.

The sequence is that of 5'-nucleotidase domain-containing protein 4 (NT5DC4) from Homo sapiens (Human).